Reading from the N-terminus, the 539-residue chain is Phosphoenolpyruvate carboxykinase (ATP) (539 aa).

Substrate is bound by residues arginine 64, tyrosine 206, and lysine 212. ATP contacts are provided by residues lysine 212, histidine 231, and 247–255 (GLSGTGKTT). Mn(2+) contacts are provided by lysine 212 and histidine 231. Residue aspartate 268 participates in Mn(2+) binding. ATP-binding positions include glutamate 296, arginine 332, 448 to 449 (RI), and threonine 454. Residue arginine 332 coordinates substrate.

It belongs to the phosphoenolpyruvate carboxykinase (ATP) family. As to quaternary structure, monomer. It depends on Mn(2+) as a cofactor.

Its subcellular location is the cytoplasm. It carries out the reaction oxaloacetate + ATP = phosphoenolpyruvate + ADP + CO2. Its pathway is carbohydrate biosynthesis; gluconeogenesis. Its function is as follows. Involved in the gluconeogenesis. Catalyzes the conversion of oxaloacetate (OAA) to phosphoenolpyruvate (PEP) through direct phosphoryl transfer between the nucleoside triphosphate and OAA. This chain is Phosphoenolpyruvate carboxykinase (ATP), found in Yersinia pestis bv. Antiqua (strain Antiqua).